Here is a 509-residue protein sequence, read N- to C-terminus: ATP synthase subunit alpha (509 aa).

169 to 176 (GDRQTGKT) provides a ligand contact to ATP.

It belongs to the ATPase alpha/beta chains family. F-type ATPases have 2 components, CF(1) - the catalytic core - and CF(0) - the membrane proton channel. CF(1) has five subunits: alpha(3), beta(3), gamma(1), delta(1), epsilon(1). CF(0) has three main subunits: a(1), b(2) and c(9-12). The alpha and beta chains form an alternating ring which encloses part of the gamma chain. CF(1) is attached to CF(0) by a central stalk formed by the gamma and epsilon chains, while a peripheral stalk is formed by the delta and b chains.

It is found in the cell inner membrane. It carries out the reaction ATP + H2O + 4 H(+)(in) = ADP + phosphate + 5 H(+)(out). Functionally, produces ATP from ADP in the presence of a proton gradient across the membrane. The alpha chain is a regulatory subunit. The protein is ATP synthase subunit alpha of Methylobacterium sp. (strain 4-46).